A 238-amino-acid polypeptide reads, in one-letter code: Uridylate kinase (238 aa).

Position 12 to 15 (lysine 12 to glycine 15) interacts with ATP. Glycine 54 is a UMP binding site. ATP contacts are provided by glycine 55 and arginine 59. UMP contacts are provided by residues aspartate 74 and threonine 135 to threonine 142. ATP-binding residues include threonine 162, tyrosine 168, and aspartate 171.

This sequence belongs to the UMP kinase family. In terms of assembly, homohexamer.

Its subcellular location is the cytoplasm. It catalyses the reaction UMP + ATP = UDP + ADP. The protein operates within pyrimidine metabolism; CTP biosynthesis via de novo pathway; UDP from UMP (UMPK route): step 1/1. With respect to regulation, inhibited by UTP. Its function is as follows. Catalyzes the reversible phosphorylation of UMP to UDP. The sequence is that of Uridylate kinase from Oleidesulfovibrio alaskensis (strain ATCC BAA-1058 / DSM 17464 / G20) (Desulfovibrio alaskensis).